A 156-amino-acid chain; its full sequence is Rhombotin-1 (156 aa).

LIM zinc-binding domains are found at residues 24–83 (CAGC…RLFG) and 88–147 (CAAC…EGQL).

In terms of tissue distribution, expressed mainly in the central nervous. Low level of expression in other tissues including thymus.

It localises to the nucleus. Functionally, may be involved in gene regulation within neural lineage cells potentially by direct DNA binding or by binding to other transcription factors. This chain is Rhombotin-1 (LMO1), found in Homo sapiens (Human).